The sequence spans 551 residues: Calcium-dependent protein kinase 3 (551 aa).

The segment at 1 to 57 (MGNCCRSPAAAAREDVKSSHFPASAGKKKPHQARNGGVGGGGGGGGGGGGGGGAGQK) is disordered. Residue Gly-2 is the site of N-myristoyl glycine attachment. A compositionally biased stretch (gly residues) spans 36-55 (GGVGGGGGGGGGGGGGGGAG). In terms of domain architecture, Protein kinase spans 77 to 335 (YALDRELGRG…AKQVLEHPWL (259 aa)). Residues 83–91 (LGRGEFGVT) and Lys-106 each bind ATP. Catalysis depends on Asp-201, which acts as the Proton acceptor. The segment at 341-371 (APNVPLGDIVKSRLKQFSRMNRFKRRALRVI) is autoinhibitory domain. 4 consecutive EF-hand domains span residues 378–413 (EEVE…FGSH), 414–449 (LAES…LQRM), 450–485 (ANDE…DGAG), and 486–521 (DSME…GTDW). The Ca(2+) site is built by Asp-391, Asp-393, Asp-395, Glu-402, Asp-427, Asn-429, Glu-438, Asp-463, Asp-465, Asn-467, Tyr-469, Glu-474, Asp-499, Asp-501, Asp-503, Lys-505, and Glu-510.

This sequence belongs to the protein kinase superfamily. Ser/Thr protein kinase family. CDPK subfamily. Expressed in roots and developing seeds.

It is found in the membrane. It carries out the reaction L-seryl-[protein] + ATP = O-phospho-L-seryl-[protein] + ADP + H(+). The catalysed reaction is L-threonyl-[protein] + ATP = O-phospho-L-threonyl-[protein] + ADP + H(+). With respect to regulation, activated by calcium. Autophosphorylation may play an important role in the regulation of the kinase activity. May play a role in signal transduction pathways that involve calcium as a second messenger. This is Calcium-dependent protein kinase 3 from Oryza sativa subsp. japonica (Rice).